Reading from the N-terminus, the 399-residue chain is Glycerol-1-phosphate dehydrogenase [NAD(P)+] (399 aa).

Residues D56, G118–D122, and T140–S143 each bind NAD(+). A substrate-binding site is contributed by D145. Position 149 (S149) interacts with NAD(+). D192 provides a ligand contact to substrate. The Ni(2+) site is built by D192 and H272. H276 lines the substrate pocket. H292 contacts Ni(2+).

It belongs to the glycerol-1-phosphate dehydrogenase family. As to quaternary structure, homodimer. The cofactor is Ni(2+).

It localises to the cytoplasm. The enzyme catalyses sn-glycerol 1-phosphate + NAD(+) = dihydroxyacetone phosphate + NADH + H(+). The catalysed reaction is sn-glycerol 1-phosphate + NADP(+) = dihydroxyacetone phosphate + NADPH + H(+). In terms of biological role, catalyzes the NAD(P)H-dependent reduction of dihydroxyacetonephosphate (DHAP or glycerone phosphate) to glycerol 1-phosphate (G1P). The G1P thus generated is probably used for the synthesis of phosphoglycerolipids in Gram-positive bacterial species. The chain is Glycerol-1-phosphate dehydrogenase [NAD(P)+] from Halalkalibacterium halodurans (strain ATCC BAA-125 / DSM 18197 / FERM 7344 / JCM 9153 / C-125) (Bacillus halodurans).